The sequence spans 45 residues: Small, acid-soluble spore protein P (45 aa).

Over residues 1–12 the composition is skewed to basic and acidic residues; that stretch reads MTERHTAKDIRK. Residues 1 to 45 form a disordered region; sequence MTERHTAKDIRKNAPKGENPGQPEPLSGSKKVKKRNHVSQTNGEG.

The protein belongs to the SspP family.

The protein localises to the spore core. The chain is Small, acid-soluble spore protein P from Halalkalibacterium halodurans (strain ATCC BAA-125 / DSM 18197 / FERM 7344 / JCM 9153 / C-125) (Bacillus halodurans).